The chain runs to 518 residues: Chromosomal replication initiator protein DnaA (518 aa).

The interval 1–72 (MNEFWQHCSA…DLARDFWHSP (72 aa)) is domain I, interacts with DnaA modulators. Residues 72-181 (PVDVQFVLDP…GESDSTYERS (110 aa)) are domain II. Residues 155–178 (AAARRTWRPGAAAQAAGGESDSTY) are disordered. The segment at 182 to 398 (KLNPVLTFDN…GALRKILAYS (217 aa)) is domain III, AAA+ region. ATP contacts are provided by glycine 226, glycine 228, lysine 229, and threonine 230. Residues 399–518 (KFHGREITIE…LHVLEQTLKG (120 aa)) form a domain IV, binds dsDNA region.

This sequence belongs to the DnaA family. In terms of assembly, oligomerizes as a right-handed, spiral filament on DNA at oriC.

Its subcellular location is the cytoplasm. Its function is as follows. Plays an essential role in the initiation and regulation of chromosomal replication. ATP-DnaA binds to the origin of replication (oriC) to initiate formation of the DNA replication initiation complex once per cell cycle. Binds the DnaA box (a 9 base pair repeat at the origin) and separates the double-stranded (ds)DNA. Forms a right-handed helical filament on oriC DNA; dsDNA binds to the exterior of the filament while single-stranded (ss)DNA is stabiized in the filament's interior. The ATP-DnaA-oriC complex binds and stabilizes one strand of the AT-rich DNA unwinding element (DUE), permitting loading of DNA polymerase. After initiation quickly degrades to an ADP-DnaA complex that is not apt for DNA replication. Binds acidic phospholipids. The polypeptide is Chromosomal replication initiator protein DnaA (Paraburkholderia phymatum (strain DSM 17167 / CIP 108236 / LMG 21445 / STM815) (Burkholderia phymatum)).